A 278-amino-acid polypeptide reads, in one-letter code: Gamma carbonic anhydrase 2, mitochondrial (278 aa).

The N-terminal 43 residues, M1–R43, are a transit peptide targeting the mitochondrion. Residues R86 to D88 and Q101 to D102 contribute to the substrate site. The Zn(2+) site is built by H107, H130, and H135. N209 provides a ligand contact to substrate.

Belongs to the gamma-class carbonic anhydrase family. In terms of assembly, homotrimer. Component of the mitochondrial oxidoreductase respiratory chain complex I; element of the extra matrix-exposed domain, which is attached to the membrane arm of this complex. Interacts with GAMMACAL1 and GAMMACAL2. The cofactor is Zn(2+). Constitutively expressed in roots and leaves, with higher levels in flowers, particularly in tapetal tissue of anthers, inflorescence (IM) and floral meristems (FM).

It is found in the mitochondrion membrane. Functionally, enzyme involved in the catabolism of H(2)CO(3) but that does not mediates the reversible hydration of carbon dioxide. Mediates complex I assembly in mitochondria and respiration. Binds HCO(3)-. Required for male fertility during anther development and dehiscence to regulate the secondary thickenings of the endothecial cell wall, probably by modulating H(2)O(2)-dependent lignin polymerization. This chain is Gamma carbonic anhydrase 2, mitochondrial (GAMMACA2), found in Arabidopsis thaliana (Mouse-ear cress).